The primary structure comprises 435 residues: GTPase Obg (435 aa).

In terms of domain architecture, Obg spans 6 to 164 (ADFVDRVKIF…RWLELELKIL (159 aa)). An OBG-type G domain is found at 165-335 (ADVGLVGYPN…LVSKLASIVR (171 aa)). Residues 171 to 178 (GYPNVGKS), 196 to 200 (FTTLI), 217 to 220 (DIPG), 287 to 290 (NKID), and 316 to 318 (SAV) each bind GTP. Residues serine 178 and threonine 198 each coordinate Mg(2+). Residues 357–435 (RRLPEKFHLE…IGDFEFEYRE (79 aa)) form the OCT domain.

It belongs to the TRAFAC class OBG-HflX-like GTPase superfamily. OBG GTPase family. In terms of assembly, monomer. Mg(2+) is required as a cofactor.

The protein localises to the cytoplasm. An essential GTPase which binds GTP, GDP and possibly (p)ppGpp with moderate affinity, with high nucleotide exchange rates and a fairly low GTP hydrolysis rate. Plays a role in control of the cell cycle, stress response, ribosome biogenesis and in those bacteria that undergo differentiation, in morphogenesis control. The chain is GTPase Obg from Thermotoga maritima (strain ATCC 43589 / DSM 3109 / JCM 10099 / NBRC 100826 / MSB8).